A 925-amino-acid chain; its full sequence is MGGQESKLAFQRGIARLASQPDIPLDDEVWVSLWSVPESCPEVYDFFPPGLIREMRDHAFVNLEKLLLVLTSRLFALKNDKKFPNPETAPASEALNCIRLLTRIIPFLNEKLDLEEWHQKFWWSLRKKRNLPKENSELDLSNFQDDLDFENSISQKNEFSQKSPSVPLSPVSTFPASSISLDASSDVSAADVSVGGSSTIKEIGSIEETFTHEKTLMEELLDTVFRLLFCRGFTLPLSSPEQYAYIIWENGIGTTETQEKTTKELAFNRIEVLRLLLVLISKRLYRSSEVASHTLTYLTCVANKQLILVFLYSLINTTLRLRPDSWKASYSTLVPYNDSSIALSKLTSQILLLFLDHTPHETTVEYFRQRLNLSPGAAIENQYRLYFSRLQLQADYEFLVNELYRLLNAPVSAISAYISIVQKPNIAFPEIILFLWQAILYNKRFRAFLITSPYATEFLTSIQFYALRYREDNEHSGLVRICLFIVHYLSCEKVLCEKLNRNCMNAQSLMSSLGFSVPPMSYAEFLIISSFHISAVKRSPFSSLSPVILLTICNIAPFVENLSFVTCAKLMQLCSSLSSPRFLFRNPRNHLLLEYLLQAISSIVENKFSQNPNLSYSIIRLQQVFLNLNSMKLPAVAQTKSQPLVALNSEGSSDFESKSSDNTSLDGTPLQNTDFKKVATVEDDSPFDELDKFSSPFSSSSSRGGLSHISSRNVSISVPTVLQDVFSDSPLVLSRKLRGKIPENVSSSELIKKCASNPFGKDLEIDSNLFAPSNSWFNSWHSRLELDSILAIISQFSLPVYKKMNEELSTTDEAVKLLANSVLNDVHPRVPNFRYFIWSVPMNNWFQSLVWLYTLSFDEKGLMATPSLFTTSKVYKQHGNIMKVASPENSSNSMENATKSILDKLDLLYLQLPSSVNHDSSLRNK.

Positions 650-664 are enriched in low complexity; sequence EGSSDFESKSSDNTS. Positions 650-671 are disordered; sequence EGSSDFESKSSDNTSLDGTPLQ.

This sequence belongs to the hid-1 family. In terms of assembly, interacts with ubp5.

Its subcellular location is the cytoplasm. It localises to the golgi apparatus. In terms of biological role, required for the localization of ubp5 to the Golgi apparatus. Involved in detoxification of cadmium ion. The chain is Ubp5-interacting protein ftp105 (ftp105) from Schizosaccharomyces pombe (strain 972 / ATCC 24843) (Fission yeast).